Consider the following 692-residue polypeptide: Elongation factor G 2 (692 aa).

Residues 8–283 form the tr-type G domain; it reads KDVRNIGIMA…GVVNYLPSPL (276 aa). Residues 17–24, 81–85, and 135–138 each bind GTP; these read AHIDAGKT, DTPGH, and NKMD.

This sequence belongs to the TRAFAC class translation factor GTPase superfamily. Classic translation factor GTPase family. EF-G/EF-2 subfamily.

It localises to the cytoplasm. Functionally, catalyzes the GTP-dependent ribosomal translocation step during translation elongation. During this step, the ribosome changes from the pre-translocational (PRE) to the post-translocational (POST) state as the newly formed A-site-bound peptidyl-tRNA and P-site-bound deacylated tRNA move to the P and E sites, respectively. Catalyzes the coordinated movement of the two tRNA molecules, the mRNA and conformational changes in the ribosome. This is Elongation factor G 2 from Desulfotalea psychrophila (strain LSv54 / DSM 12343).